We begin with the raw amino-acid sequence, 444 residues long: Bystin (444 aa).

2 disordered regions span residues 1–37 (MAKKRDRIVNTQPFISDDASVASSRKRSKVPKTHQKQ) and 53–85 (ALAQQKEVADEENAERNPSSAAFAVAGAATAGE). A compositionally biased stretch (basic residues) spans 24–34 (SRKRSKVPKTH). Over residues 73–84 (AAFAVAGAATAG) the composition is skewed to low complexity.

This sequence belongs to the bystin family. Component of the 40S pre-ribosome. Highly expressed in flowers and at lower levels in roots, hypocotyls, stems, leaves, siliques and seeds.

The protein localises to the nucleus. It is found in the nucleolus. It localises to the nucleoplasm. Essential protein required during embryogenesis and pollen development. Required for processing of 20S pre-rRNA precursor and biogenesis of 40S ribosomal subunits. The sequence is that of Bystin from Arabidopsis thaliana (Mouse-ear cress).